We begin with the raw amino-acid sequence, 299 residues long: Apolipoprotein E (299 aa).

The signal sequence occupies residues 1–18; sequence MKVLCTVLVVTLLAGCQA. An 8 X 22 AA approximate tandem repeats region spans residues 74 to 245; sequence VLMEDTMKAV…RLEEVREQME (172 aa). 8 tandem repeats follow at residues 75-95, 96-117, 118-139, 140-161, 162-183, 184-206, 207-225, and 224-242. At Met137 the chain carries Methionine sulfoxide. Residue Ser141 is modified to Phosphoserine. Residues 152 to 162 are LDL and other lipoprotein receptors binding; that stretch reads HLRKLRKKLLR. 156 to 159 lines the heparin pocket; it reads LRKK. A lipid-binding and lipoprotein association region spans residues 205–273; sequence ALTSQPLQER…GWFEPMVEDM (69 aa). Position 219–226 (219–226) interacts with heparin; it reads GKRLRGRL. A specificity for association with VLDL region spans residues 261–273; sequence RLKGWFEPMVEDM.

This sequence belongs to the apolipoprotein A1/A4/E family. Homotetramer. May interact with ABCA1; functionally associated with ABCA1 in the biogenesis of HDLs. May interact with APP/A4 amyloid-beta peptide; the interaction is extremely stable in vitro but its physiological significance is unclear. May interact with MAPT. May interact with MAP2. In the cerebrospinal fluid, interacts with secreted SORL1. Interacts with PMEL; this allows the loading of PMEL luminal fragment on ILVs to induce fibril nucleation. In terms of processing, APOE exists as multiple glycosylated and sialylated glycoforms within cells and in plasma. The extent of glycosylation and sialylation are tissue and context specific. Post-translationally, glycated in plasma VLDL. Phosphorylated by FAM20C in the extracellular medium.

It localises to the secreted. It is found in the extracellular space. The protein resides in the extracellular matrix. The protein localises to the extracellular vesicle. Its subcellular location is the endosome. It localises to the multivesicular body. Functionally, APOE is an apolipoprotein, a protein associating with lipid particles, that mainly functions in lipoprotein-mediated lipid transport between organs via the plasma and interstitial fluids. APOE is a core component of plasma lipoproteins and is involved in their production, conversion and clearance. Apolipoproteins are amphipathic molecules that interact both with lipids of the lipoprotein particle core and the aqueous environment of the plasma. As such, APOE associates with chylomicrons, chylomicron remnants, very low density lipoproteins (VLDL) and intermediate density lipoproteins (IDL) but shows a preferential binding to high-density lipoproteins (HDL). It also binds a wide range of cellular receptors including the LDL receptor/LDLR, the LDL receptor-related proteins LRP1, LRP2 and LRP8 and the very low-density lipoprotein receptor/VLDLR that mediate the cellular uptake of the APOE-containing lipoprotein particles. Finally, APOE also has a heparin-binding activity and binds heparan-sulfate proteoglycans on the surface of cells, a property that supports the capture and the receptor-mediated uptake of APOE-containing lipoproteins by cells. A main function of APOE is to mediate lipoprotein clearance through the uptake of chylomicrons, VLDLs, and HDLs by hepatocytes. APOE is also involved in the biosynthesis by the liver of VLDLs as well as their uptake by peripheral tissues ensuring the delivery of triglycerides and energy storage in muscle, heart and adipose tissues. By participating in the lipoprotein-mediated distribution of lipids among tissues, APOE plays a critical role in plasma and tissues lipid homeostasis. APOE is also involved in two steps of reverse cholesterol transport, the HDLs-mediated transport of cholesterol from peripheral tissues to the liver, and thereby plays an important role in cholesterol homeostasis. First, it is functionally associated with ABCA1 in the biogenesis of HDLs in tissues. Second, it is enriched in circulating HDLs and mediates their uptake by hepatocytes. APOE also plays an important role in lipid transport in the central nervous system, regulating neuron survival and sprouting. This is Apolipoprotein E (APOE) from Ctenomys sociabilis (Social tuco-tuco).